The sequence spans 251 residues: Flap endonuclease Xni (251 aa).

D104 lines the Mg(2+) pocket. The region spanning 160 to 249 is the 5'-3' exonuclease domain; sequence VQPQQLPDYW…IDGNLQQLRL (90 aa). Residues L171, A172, P180, V182, and I185 each coordinate K(+). An interaction with DNA region spans residues 184-189; it reads GIGPKS.

It belongs to the Xni family. Mg(2+) serves as cofactor. It depends on K(+) as a cofactor.

Functionally, has flap endonuclease activity. During DNA replication, flap endonucleases cleave the 5'-overhanging flap structure that is generated by displacement synthesis when DNA polymerase encounters the 5'-end of a downstream Okazaki fragment. The polypeptide is Flap endonuclease Xni (Escherichia coli O17:K52:H18 (strain UMN026 / ExPEC)).